We begin with the raw amino-acid sequence, 303 residues long: MTKTQLHLNNFLTLAQEAGSLPKLAKLCGYRTPVALYKLKQRLEKQAEDPDARGIRPSLMAKLEKHTGKPKGWLDRKHRERTVPETAAESTGTAETRIAETASAAGCRSVTVNRNTCETQITVSINLDGSGKSRLDTGVPFLEHMIDQIARHGMIDIDISCKGDLHIDDHHTAEDIGITLGQAIRQALGDKKGIRRYGHSYVPLDEALSRVVIDLSGRPGLVYNIEFTRTLIGRFDVDLFEEFFHGIVNHSMMTLHIDNLSGKNAHHQAETVFKAFGRALRMAVEHDPRMAGQTPSTKGTLTA.

This sequence belongs to the imidazoleglycerol-phosphate dehydratase family.

It localises to the cytoplasm. The catalysed reaction is D-erythro-1-(imidazol-4-yl)glycerol 3-phosphate = 3-(imidazol-4-yl)-2-oxopropyl phosphate + H2O. It participates in amino-acid biosynthesis; L-histidine biosynthesis; L-histidine from 5-phospho-alpha-D-ribose 1-diphosphate: step 6/9. This is Imidazoleglycerol-phosphate dehydratase from Neisseria gonorrhoeae (strain ATCC 700825 / FA 1090).